Consider the following 99-residue polypeptide: Nucleoid-associated protein SSU98_0195 (99 aa).

This sequence belongs to the YbaB/EbfC family. In terms of assembly, homodimer.

Its subcellular location is the cytoplasm. The protein resides in the nucleoid. Binds to DNA and alters its conformation. May be involved in regulation of gene expression, nucleoid organization and DNA protection. The protein is Nucleoid-associated protein SSU98_0195 of Streptococcus suis (strain 98HAH33).